Here is a 129-residue protein sequence, read N- to C-terminus: Procyclic form-specific polypeptide A-beta (129 aa).

The signal sequence occupies residues 1-27; that stretch reads MAPRSLYLLAVLLFSANLFAGVGFAAA. A disordered region spans residues 27–111; it reads AAEGPEDKGL…PEPEPGAATL (85 aa). The span at 53-104 shows a compositional bias: acidic residues; that stretch reads DDTNGTDPDPEPEPEPEPEPEPEPEPEPEPEPEPEPEPEPEPEPEPEPEPEP. A glycan (N-linked (GlcNAc...) asparagine) is linked at asparagine 56. 24 repeat units span residues 59-60, 61-62, 63-64, 65-66, 67-68, 69-70, 71-72, 73-74, 75-76, 77-78, 79-80, 81-82, 83-84, 85-86, 87-88, 89-90, 91-92, 93-94, 95-96, 97-98, 99-100, 101-102, 103-104, and 105-106. The tract at residues 59–106 is 24 X 2 AA tandem repeats of [DE]-P; that stretch reads DPDPEPEPEPEPEPEPEPEPEPEPEPEPEPEPEPEPEPEPEPEPEPEP. Glycine 107 carries GPI-anchor amidated glycine lipidation. Residues 108 to 129 constitute a propeptide that is removed on maturation; that stretch reads AATLKSVALPFAIAAVGLVAAF.

The protein resides in the cell membrane. Its function is as follows. Major surface antigen of procyclic forms. This chain is Procyclic form-specific polypeptide A-beta (PARPA-BETA), found in Trypanosoma brucei brucei.